Here is a 323-residue protein sequence, read N- to C-terminus: MFTSNGSCGPATALDNLSKRVGQDRTLENDHVARFRDQNSSQNRAFRAESSFNTTAGAEFGQFQNTSVQRNYFPSAELIRKNTRFGDNWSSEFRQQQENNKWVEDFGAMNLENVRMEQEQSFQTMDQRTNMQAMSSTANAWTQEFNHMQHNKEMEYEMRIRETQRLVNAPAREVFSMVNQHSQQHNQNFTHNQTQLGDQSHYMTNLAFERQFETVQNEIDGMDMFSDSEQVEQQKELQKEDDNNDIETTKFAEIAQQVFNQMNNVDTTVSQNTEHKFKQSNFLRLMDKVAQREVEINGSGDRFIDKTGNDIRDYLPDPLSDLR.

A Glycyl cysteine thioester (Cys-Gly) (interchain with G-Cter in ubiquitin) cross-link involves residue Cys-8. Lys-19 is covalently cross-linked (Glycyl lysine isopeptide (Lys-Gly) (interchain with G-Cter in ubiquitin)). 3 short sequence motifs (wxxxF/Y motif) span residues 89-93, 102-105, and 141-145; these read WSSEF, WVED, and WTQEF.

This sequence belongs to the peroxisomal targeting signal receptor family. Interacts (via WxxxF/Y and LVxEF motifs) with PEX14; promoting translocation through the PEX13-PEX14 docking complex. Interacts with PEX7. Monoubiquitinated at Cys-8 by PEX2 during PEX20 passage through the PEX2-PEX10-PEX12 retrotranslocation channel: monoubiquitination acts as a signal for PEX20 extraction and is required for proper export from peroxisomes and recycling. When PEX5 recycling is compromised, polyubiquitinated at Lys-19 by PEX10 during its passage through the retrotranslocation channel, leading to its degradation.

Its subcellular location is the cytoplasm. The protein resides in the cytosol. It localises to the peroxisome matrix. In terms of biological role, coreceptor required for the peroxisomal import of proteins containing a C-terminal PTS2-type peroxisomal targeting signal, such as 3-oxoacyl-CoA thiolase. Acts via its interaction with PEX7, promoting association between PEX7 bound to cargo proteins and the PEX13-PEX14 docking complex. PEX20 along with PEX7 and PTS2-containing cargo proteins are tranlocated into peroxisomes by passing through the PEX13-PEX14 docking complex. PEX20 coreceptor is then retrotranslocated into the cytosol, leading to release of bound cargo in the peroxisome matrix, and reset for a subsequent peroxisome import cycle. Also mediates peroxisomal import of proteins that do not contain PTS1- or PTS2-type peroxisomal targeting signals, such as acyl-CoA oxidases (Aox) izozymes. Import of acyl-CoA oxidases (Aox) izozymes is independent of PEX7. Required for PEX7 ubiquitination. This Komagataella pastoris (Yeast) protein is Peroxisome biogenesis protein 20.